The primary structure comprises 109 residues: MPRTIVAILVLAVVALGASYGFVQSYRALGIAQGEIKRQTARAEALEVRYATLQRHVKEVAARTNTQRQEVDRALDQNRPWADRPVPAAVVDSLCNRPGARCAVRTPTD.

Residues 1–17 (MPRTIVAILVLAVVALG) form a helical; Signal-anchor for type II membrane protein membrane-spanning segment. Residues 27 to 63 (RALGIAQGEIKRQTARAEALEVRYATLQRHVKEVAAR) are a coiled coil.

As to quaternary structure, interacts (via C-terminus) with the spanin outer lipoprotein subunit (via C-terminus). Part of the spanin complex which spans the entire periplasmic space. The spanin complex is composed of spanin inner membrane subunit and spanin outer membrane subunit.

The protein localises to the host cell inner membrane. Component of the spanin complex that disrupts the host outer membrane and participates in cell lysis during virus exit. The spanin complex conducts the final step in host lysis by disrupting the outer membrane after holin and endolysin action have permeabilized the inner membrane and degraded the host peptidoglycans. Host outer membrane disruption is possibly due to local fusion between the inner and outer membrane performed by the spanin complex. This is Probable spanin, inner membrane subunit from Pseudomonas aeruginosa.